Here is a 326-residue protein sequence, read N- to C-terminus: Alkanal monooxygenase beta chain (326 aa).

This sequence belongs to the bacterial luciferase oxidoreductase family. As to quaternary structure, heterodimer of an alpha and a beta chain.

It catalyses the reaction a long-chain fatty aldehyde + FMNH2 + O2 = a long-chain fatty acid + hnu + FMN + H2O + 2 H(+). Its function is as follows. Light-emitting reaction in luminous bacteria. The specific role of the beta subunit is unknown, but it is absolutely required for bioluminescence activity. This Aliivibrio fischeri (Vibrio fischeri) protein is Alkanal monooxygenase beta chain (luxB).